Here is a 1935-residue protein sequence, read N- to C-terminus: Myosin-7 (1935 aa).

The Myosin N-terminal SH3-like domain maps to 32–81 (DLKKDVFVPDDKEEFVKATILSREGGKVTAETEHGKTVTVKEDQVLQQNP). Residues 85–778 (DKIEDMAMLT…LLGLLEEMRD (694 aa)) enclose the Myosin motor domain. Lys129 carries the N6,N6,N6-trimethyllysine modification. 178–185 (GESGAGKT) is a binding site for ATP. The residue at position 378 (Thr378) is a Phosphothreonine. Actin-binding regions lie at residues 655 to 677 (LNKL…IPNE) and 757 to 771 (KFGH…GLLG). The IQ domain occupies 781-810 (LSRIITRIQAQSRGVLSRMEFKKLLERRDS). A coiled-coil region spans residues 839 to 1935 (LLKSAETEKE…DIGTKGLNEE (1097 aa)). Phosphoserine occurs at positions 1137 and 1269. A Phosphothreonine modification is found at Thr1282. The residue at position 1308 (Tyr1308) is a Phosphotyrosine. Phosphothreonine is present on Thr1309. Ser1510 carries the post-translational modification Phosphoserine. Thr1513 carries the phosphothreonine modification. A disordered region spans residues 1907–1935 (EERADIAESQVNKLRAKSRDIGTKGLNEE). The span at 1923–1935 (KSRDIGTKGLNEE) shows a compositional bias: basic and acidic residues.

Belongs to the TRAFAC class myosin-kinesin ATPase superfamily. Myosin family. As to quaternary structure, muscle myosin is a hexameric protein that consists of 2 heavy chain subunits (MHC), 2 alkali light chain subunits (MLC) and 2 regulatory light chain subunits (MLC-2). Interacts with ECPAS. Interacts (via C-terminus) with LRRC39.

The protein localises to the cytoplasm. It is found in the myofibril. It localises to the sarcomere. In terms of biological role, myosins are actin-based motor molecules with ATPase activity essential for muscle contraction. Forms regular bipolar thick filaments that, together with actin thin filaments, constitute the fundamental contractile unit of skeletal and cardiac muscle. In Bos taurus (Bovine), this protein is Myosin-7 (MYH7).